The chain runs to 463 residues: Siroheme synthase (463 aa).

Residues 1–203 (MDYLPLFHKL…GQGAEAERLL (203 aa)) form a precorrin-2 dehydrogenase /sirohydrochlorin ferrochelatase region. NAD(+) contacts are provided by residues 22 to 23 (EI) and 43 to 44 (PE). Phosphoserine is present on Ser128. The uroporphyrinogen-III C-methyltransferase stretch occupies residues 216 to 463 (GEVYLVGAGP…LAWFEGAQNS (248 aa)). Pro225 provides a ligand contact to S-adenosyl-L-methionine. Catalysis depends on Asp248, which acts as the Proton acceptor. The Proton donor role is filled by Lys270. S-adenosyl-L-methionine-binding positions include 301–303 (GGD), Ile306, 331–332 (TA), Met383, and Gly412.

The protein in the N-terminal section; belongs to the precorrin-2 dehydrogenase / sirohydrochlorin ferrochelatase family. In the C-terminal section; belongs to the precorrin methyltransferase family.

It catalyses the reaction uroporphyrinogen III + 2 S-adenosyl-L-methionine = precorrin-2 + 2 S-adenosyl-L-homocysteine + H(+). It carries out the reaction precorrin-2 + NAD(+) = sirohydrochlorin + NADH + 2 H(+). The enzyme catalyses siroheme + 2 H(+) = sirohydrochlorin + Fe(2+). It functions in the pathway cofactor biosynthesis; adenosylcobalamin biosynthesis; precorrin-2 from uroporphyrinogen III: step 1/1. It participates in cofactor biosynthesis; adenosylcobalamin biosynthesis; sirohydrochlorin from precorrin-2: step 1/1. Its pathway is porphyrin-containing compound metabolism; siroheme biosynthesis; precorrin-2 from uroporphyrinogen III: step 1/1. The protein operates within porphyrin-containing compound metabolism; siroheme biosynthesis; siroheme from sirohydrochlorin: step 1/1. It functions in the pathway porphyrin-containing compound metabolism; siroheme biosynthesis; sirohydrochlorin from precorrin-2: step 1/1. Its function is as follows. Multifunctional enzyme that catalyzes the SAM-dependent methylations of uroporphyrinogen III at position C-2 and C-7 to form precorrin-2 via precorrin-1. Then it catalyzes the NAD-dependent ring dehydrogenation of precorrin-2 to yield sirohydrochlorin. Finally, it catalyzes the ferrochelation of sirohydrochlorin to yield siroheme. In Pseudomonas entomophila (strain L48), this protein is Siroheme synthase.